A 263-amino-acid polypeptide reads, in one-letter code: Probable septum site-determining protein MinC (263 aa).

The disordered stretch occupies residues 107-159; the sequence is LPPSGARERPLDIKDSAPRKPAEEPSPSAGEARPEPAKAEEKPADPVSRPTKV. Basic and acidic residues-rich tracts occupy residues 112-129 and 138-150; these read ARERPLDIKDSAPRKPAE and ARPEPAKAEEKPA.

This sequence belongs to the MinC family. In terms of assembly, interacts with MinD and FtsZ.

Cell division inhibitor that blocks the formation of polar Z ring septums. Rapidly oscillates between the poles of the cell to destabilize FtsZ filaments that have formed before they mature into polar Z rings. Prevents FtsZ polymerization. The polypeptide is Probable septum site-determining protein MinC (Pseudomonas aeruginosa (strain UCBPP-PA14)).